The following is a 66-amino-acid chain: Large ribosomal subunit protein bL33c (66 aa).

Belongs to the bacterial ribosomal protein bL33 family.

The protein resides in the plastid. The protein localises to the chloroplast. In Cucumis sativus (Cucumber), this protein is Large ribosomal subunit protein bL33c.